A 344-amino-acid polypeptide reads, in one-letter code: DNA polymerase IV (344 aa).

A UmuC domain is found at 2–183 (IMLIDFDYFF…IKINDIPGIG (182 aa)). Residues Asp-6 and Asp-105 each coordinate Mg(2+). Residue Glu-106 is part of the active site.

This sequence belongs to the DNA polymerase type-Y family. Monomer. Mg(2+) is required as a cofactor.

The protein localises to the cytoplasm. The enzyme catalyses DNA(n) + a 2'-deoxyribonucleoside 5'-triphosphate = DNA(n+1) + diphosphate. Poorly processive, error-prone DNA polymerase involved in untargeted mutagenesis. Copies undamaged DNA at stalled replication forks, which arise in vivo from mismatched or misaligned primer ends. These misaligned primers can be extended by PolIV. Exhibits no 3'-5' exonuclease (proofreading) activity. May be involved in translesional synthesis. This Picrophilus torridus (strain ATCC 700027 / DSM 9790 / JCM 10055 / NBRC 100828 / KAW 2/3) protein is DNA polymerase IV.